The chain runs to 629 residues: tRNA uridine 5-carboxymethylaminomethyl modification enzyme MnmG (629 aa).

Residues 13 to 18 (GGGHAG), Val125, and Ser180 contribute to the FAD site. 273–287 (GPRYCPSIEDKVMRF) contributes to the NAD(+) binding site. Residue Gln370 coordinates FAD.

It belongs to the MnmG family. In terms of assembly, homodimer. Heterotetramer of two MnmE and two MnmG subunits. FAD is required as a cofactor.

The protein resides in the cytoplasm. NAD-binding protein involved in the addition of a carboxymethylaminomethyl (cmnm) group at the wobble position (U34) of certain tRNAs, forming tRNA-cmnm(5)s(2)U34. This chain is tRNA uridine 5-carboxymethylaminomethyl modification enzyme MnmG, found in Escherichia coli O45:K1 (strain S88 / ExPEC).